We begin with the raw amino-acid sequence, 122 residues long: Large ribosomal subunit protein uL18 (122 aa).

The protein belongs to the universal ribosomal protein uL18 family. As to quaternary structure, part of the 50S ribosomal subunit; part of the 5S rRNA/L5/L18/L25 subcomplex. Contacts the 5S and 23S rRNAs.

Its function is as follows. This is one of the proteins that bind and probably mediate the attachment of the 5S RNA into the large ribosomal subunit, where it forms part of the central protuberance. The protein is Large ribosomal subunit protein uL18 of Petrotoga mobilis (strain DSM 10674 / SJ95).